The chain runs to 57 residues: Large ribosomal subunit protein bL32 (57 aa).

Positions 1–22 are enriched in basic residues; sequence MAVPKKKTSKAKRDQRRAHWRR. Residues 1–35 form a disordered region; sequence MAVPKKKTSKAKRDQRRAHWRRQASSQAQKALSLG.

Belongs to the bacterial ribosomal protein bL32 family.

In Synechocystis sp. (strain ATCC 27184 / PCC 6803 / Kazusa), this protein is Large ribosomal subunit protein bL32 (rpmF).